The chain runs to 35 residues: Photosystem II reaction center protein T (35 aa).

A helical membrane pass occupies residues 3 to 23 (ALVYTFLLISTLGIIFFAIFF).

It belongs to the PsbT family. As to quaternary structure, PSII is composed of 1 copy each of membrane proteins PsbA, PsbB, PsbC, PsbD, PsbE, PsbF, PsbH, PsbI, PsbJ, PsbK, PsbL, PsbM, PsbT, PsbY, PsbZ, Psb30/Ycf12, at least 3 peripheral proteins of the oxygen-evolving complex and a large number of cofactors. It forms dimeric complexes.

It localises to the plastid. It is found in the chloroplast thylakoid membrane. Functionally, found at the monomer-monomer interface of the photosystem II (PS II) dimer, plays a role in assembly and dimerization of PSII. PSII is a light-driven water plastoquinone oxidoreductase, using light energy to abstract electrons from H(2)O, generating a proton gradient subsequently used for ATP formation. In Welwitschia mirabilis (Tree tumbo), this protein is Photosystem II reaction center protein T.